The primary structure comprises 72 residues: uncharacterized protein (72 aa).

Residues 27–55 (YTQNLINELQEARDSINDLQRAHERLKLV) adopt a coiled-coil conformation.

This is an uncharacterized protein from Schizosaccharomyces pombe (strain 972 / ATCC 24843) (Fission yeast).